The chain runs to 490 residues: Cytochrome P450 monooxygenase anuE (490 aa).

C405 provides a ligand contact to heme.

The protein belongs to the cytochrome P450 family. The cofactor is heme.

The catalysed reaction is 2-hydroxymethyl-3-pentylphenol + reduced [NADPH--hemoprotein reductase] + O2 = (8S)-annullatin E + oxidized [NADPH--hemoprotein reductase] + H2O + H(+). It participates in secondary metabolite biosynthesis. Its function is as follows. Cytochrome P450 monooxygenase; part of the gene cluster that mediates the biosynthesis of annullatin D, an alkylated aromatic polyketide with a fused dihydrobenzofuran lactone ring system that exhibits potent agonistic activities toward the cannabinoid receptors. Within the pathway, anuE catalyzes the hydroxylation of 2-hydroxymethyl-3-pentylphenol at the side chain to produce (8S)-annullatin E. The annullatin backbone 2-hydroxymethyl-3-pentylphenol is assembled from one acetyl-CoA starter unit and 5 malonyl-CoA elongation units by cooperation of the highly reducing polyketide synthase anuA, the short-chain dehydrogenase anuB and the oxidoreductase anuC, before being hydroxylated at the C-5 alkyl chain by the cytochrome P450 monooxygenase anuE to form (8S)-annullatin E. The prenyltransferase anuH subsequently installs one isoprenyl group at the benzene ring to form (8S)-annullatin J. Enzymatic or nonenzymatic dihydro-benzofuran ring formation between the prenyl and the phenolic hydroxyl groups in (8S)-annullatin J results in two diastereomers (2S,9S)-annullatin H and compound 12. The intermediate (2S,9S)-annullatin H is then converted to (2S,9S)-annullatin D by the FAD-linked oxidoreductase anuG-catalyzed five-member lactone ring formation. The isomer 12 acts as a substrate for the short-chain dehydrogenase anuF and is oxidized to (2R)-annullatin F, which is subsequently acetylated by an acetyltransferase leading to (2R)-annullatin G formation. The remaining enzymes identified within the cluster, anuD, anuI and anuJ, seem not to be involved in annullatin biosynthesis. This Penicillium roqueforti (strain FM164) protein is Cytochrome P450 monooxygenase anuE.